The primary structure comprises 318 residues: RNA polymerase II transcription factor B subunit 3 (318 aa).

An RING-type zinc finger spans residues 13-54 (CPLCQADRYLNPNMKLLINPECYHKMCESCVDRIFTTGPAQC).

As to quaternary structure, one of the nine subunits forming the core-TFIIH basal transcription factor. Also interacts with skp1 and with the mcs2-mcs6 complex.

It localises to the cytoplasm. It is found in the nucleus. Functionally, acts as a component of the general transcription and DNA repair factor IIH (TFIIH or factor B), which is essential for both basal and activated transcription, and is involved in nucleotide excision repair (NER) of damaged DNA. TFIIH has CTD kinase activity and DNA-dependent ATPase activity, and is essential for polymerase II transcription. The protein is RNA polymerase II transcription factor B subunit 3 (pmh1) of Schizosaccharomyces pombe (strain 972 / ATCC 24843) (Fission yeast).